Reading from the N-terminus, the 331-residue chain is Biotin synthase (331 aa).

Residues 52–277 form the Radical SAM core domain; the sequence is PEVEVEGIVS…RTILRYAGGR (226 aa). The [4Fe-4S] cluster site is built by Cys67, Cys71, and Cys74. 3 residues coordinate [2Fe-2S] cluster: Cys110, Cys202, and Arg272.

This sequence belongs to the radical SAM superfamily. Biotin synthase family. As to quaternary structure, homodimer. [4Fe-4S] cluster serves as cofactor. Requires [2Fe-2S] cluster as cofactor.

It catalyses the reaction (4R,5S)-dethiobiotin + (sulfur carrier)-SH + 2 reduced [2Fe-2S]-[ferredoxin] + 2 S-adenosyl-L-methionine = (sulfur carrier)-H + biotin + 2 5'-deoxyadenosine + 2 L-methionine + 2 oxidized [2Fe-2S]-[ferredoxin]. The protein operates within cofactor biosynthesis; biotin biosynthesis; biotin from 7,8-diaminononanoate: step 2/2. Its function is as follows. Catalyzes the conversion of dethiobiotin (DTB) to biotin by the insertion of a sulfur atom into dethiobiotin via a radical-based mechanism. The polypeptide is Biotin synthase (Salinispora arenicola (strain CNS-205)).